The primary structure comprises 218 residues: Pyridoxine/pyridoxamine 5'-phosphate oxidase (218 aa).

Substrate-binding positions include 14–17 and K72; that span reads RREY. Residues 67–72, 82–83, R88, K89, and Q111 each bind FMN; these read RIVLLK and YT. 3 residues coordinate substrate: Y129, R133, and S137. Residues 146-147 and W191 each bind FMN; that span reads QS. Residue 197–199 participates in substrate binding; the sequence is RLH. R201 is an FMN binding site.

It belongs to the pyridoxamine 5'-phosphate oxidase family. As to quaternary structure, homodimer. It depends on FMN as a cofactor.

The catalysed reaction is pyridoxamine 5'-phosphate + O2 + H2O = pyridoxal 5'-phosphate + H2O2 + NH4(+). It catalyses the reaction pyridoxine 5'-phosphate + O2 = pyridoxal 5'-phosphate + H2O2. It functions in the pathway cofactor metabolism; pyridoxal 5'-phosphate salvage; pyridoxal 5'-phosphate from pyridoxamine 5'-phosphate: step 1/1. It participates in cofactor metabolism; pyridoxal 5'-phosphate salvage; pyridoxal 5'-phosphate from pyridoxine 5'-phosphate: step 1/1. In terms of biological role, catalyzes the oxidation of either pyridoxine 5'-phosphate (PNP) or pyridoxamine 5'-phosphate (PMP) into pyridoxal 5'-phosphate (PLP). The sequence is that of Pyridoxine/pyridoxamine 5'-phosphate oxidase from Enterobacter sp. (strain 638).